A 227-amino-acid chain; its full sequence is 4-nitrobenzoate reductase (227 aa).

15–19 (RRAVR) lines the FMN pocket. NAD(+) contacts are provided by serine 45, tyrosine 102, and isoleucine 107. Arginine 213 is a binding site for FMN.

The protein belongs to the nitroreductase family. The cofactor is FMN.

The catalysed reaction is 4-nitrobenzoate + 2 NADH + 2 H(+) = 4-hydroxylaminobenzoate + 2 NAD(+) + H2O. Its function is as follows. Nitroreductase involved in the degradation of nitroaromatic compounds. Catalyzes the conversion of 4-nitrobenzoate to 4-hydroxylaminobenzoate. Required for the catabolism of 4-nitrotoluene. This chain is 4-nitrobenzoate reductase, found in Pseudomonas putida (Arthrobacter siderocapsulatus).